A 439-amino-acid polypeptide reads, in one-letter code: Sodium-dependent phosphate transport protein 3 (439 aa).

N-linked (GlcNAc...) asparagine glycosylation is found at asparagine 47, asparagine 56, asparagine 68, and asparagine 69. Helical transmembrane passes span 98–118 (INYG…IFGA), 130–150 (SLLT…VIMV), 183–203 (TIAG…GGLI), 211–231 (FIFY…FTVI), 273–293 (LPLW…TIIL), 317–337 (LPFI…DFLL), 350–369 (LFSS…LPFV), 374–396 (VITI…GFII), and 415–435 (GFGL…ISQV).

This sequence belongs to the major facilitator superfamily. Sodium/anion cotransporter family. In terms of tissue distribution, expressed in the small intestine, kidney, spleen and testis. Not detected in fetal brain, bone marrow, and mammary gland.

The protein localises to the apical cell membrane. The catalysed reaction is 3 Na(+)(out) + phosphate(out) = 3 Na(+)(in) + phosphate(in). It carries out the reaction urate(out) + n chloride(in) = urate(in) + n chloride(out). Its function is as follows. Acts as a membrane potential-dependent organic anion transporter, the transport requires a low concentration of chloride ions. Mediates chloride-dependent transport of urate. Can actively transport inorganic phosphate into cells via Na(+) cotransport. The protein is Sodium-dependent phosphate transport protein 3 (SLC17A2) of Homo sapiens (Human).